Reading from the N-terminus, the 274-residue chain is NH(3)-dependent NAD(+) synthetase (274 aa).

An ATP-binding site is contributed by 46-53 (GISGGQDS). Aspartate 52 contributes to the Mg(2+) binding site. Arginine 140 provides a ligand contact to deamido-NAD(+). Threonine 160 serves as a coordination point for ATP. Glutamate 165 provides a ligand contact to Mg(2+). Deamido-NAD(+) is bound by residues lysine 173 and aspartate 180. ATP-binding residues include lysine 189 and threonine 211. 260–261 (HK) is a binding site for deamido-NAD(+).

Belongs to the NAD synthetase family. As to quaternary structure, homodimer.

The enzyme catalyses deamido-NAD(+) + NH4(+) + ATP = AMP + diphosphate + NAD(+) + H(+). The protein operates within cofactor biosynthesis; NAD(+) biosynthesis; NAD(+) from deamido-NAD(+) (ammonia route): step 1/1. Its function is as follows. Catalyzes the ATP-dependent amidation of deamido-NAD to form NAD. Uses ammonia as a nitrogen source. The protein is NH(3)-dependent NAD(+) synthetase of Lactococcus lactis subsp. cremoris (strain SK11).